Here is a 900-residue protein sequence, read N- to C-terminus: Bifunctional uridylyltransferase/uridylyl-removing enzyme (900 aa).

Residues Met1–Pro342 are uridylyltransferase. Residues Leu343 to Thr705 form a uridylyl-removing region. Residues Val461–Leu583 form the HD domain. ACT domains are found at residues Gln706–Arg789 and Ile816–Ser896.

It belongs to the GlnD family. Mg(2+) serves as cofactor.

It carries out the reaction [protein-PII]-L-tyrosine + UTP = [protein-PII]-uridylyl-L-tyrosine + diphosphate. The catalysed reaction is [protein-PII]-uridylyl-L-tyrosine + H2O = [protein-PII]-L-tyrosine + UMP + H(+). With respect to regulation, uridylyltransferase (UTase) activity is inhibited by glutamine, while glutamine activates uridylyl-removing (UR) activity. In terms of biological role, modifies, by uridylylation and deuridylylation, the PII regulatory proteins (GlnB and homologs), in response to the nitrogen status of the cell that GlnD senses through the glutamine level. Under low glutamine levels, catalyzes the conversion of the PII proteins and UTP to PII-UMP and PPi, while under higher glutamine levels, GlnD hydrolyzes PII-UMP to PII and UMP (deuridylylation). Thus, controls uridylylation state and activity of the PII proteins, and plays an important role in the regulation of nitrogen fixation and metabolism. The protein is Bifunctional uridylyltransferase/uridylyl-removing enzyme of Stutzerimonas stutzeri (strain A1501) (Pseudomonas stutzeri).